A 442-amino-acid polypeptide reads, in one-letter code: MKKVFIRTFGCQMNEYDSDKMLAVLAEEHGGIEQVTQADEADIILFNTCSVREKAQEKVFSDLGRVRPLKEKNPGLIIGVAGCVASQEGENIIKRAPYVDVVFGPQTLHRLPKMIVDKETSGLSQVDISFPEIEKFDHLPPARVEGGAAFVSIMEGCSKYCSFCVVPYTRGEEFSRPLNDVLTEIANLAQQGVKEINLLGQNVNAYRGEMDDGEICDFATLLRIVHEIPGIERMRFTTSHPREFTDSIIECYRDLPKLVSHLHLPIQSGSDRVLSAMKRGYTALEYKSIIRKLRAIRPDLCLSSDFIVGFPGETEREFEQTLKLVKDIAFDLSFVFIYSPRPGTPAANLHDDTPHEEKVRRLEALNEVIEAETARINQTMIGTVQRCLVEGISKKDPDQLQARTANNRVVNFTGTPDMINQMIDLEITEAYTFSLRGKVVEA.

Residues 2–120 form the MTTase N-terminal domain; it reads KKVFIRTFGC…LPKMIVDKET (119 aa). Positions 11, 49, 83, 157, 161, and 164 each coordinate [4Fe-4S] cluster. One can recognise a Radical SAM core domain in the interval 143 to 375; that stretch reads RVEGGAAFVS…NEVIEAETAR (233 aa). The TRAM domain maps to 378-441; the sequence is QTMIGTVQRC…TFSLRGKVVE (64 aa).

This sequence belongs to the methylthiotransferase family. MiaB subfamily. As to quaternary structure, monomer. The cofactor is [4Fe-4S] cluster.

Its subcellular location is the cytoplasm. The catalysed reaction is N(6)-dimethylallyladenosine(37) in tRNA + (sulfur carrier)-SH + AH2 + 2 S-adenosyl-L-methionine = 2-methylsulfanyl-N(6)-dimethylallyladenosine(37) in tRNA + (sulfur carrier)-H + 5'-deoxyadenosine + L-methionine + A + S-adenosyl-L-homocysteine + 2 H(+). Functionally, catalyzes the methylthiolation of N6-(dimethylallyl)adenosine (i(6)A), leading to the formation of 2-methylthio-N6-(dimethylallyl)adenosine (ms(2)i(6)A) at position 37 in tRNAs that read codons beginning with uridine. The sequence is that of tRNA-2-methylthio-N(6)-dimethylallyladenosine synthase from Neisseria meningitidis serogroup C / serotype 2a (strain ATCC 700532 / DSM 15464 / FAM18).